Consider the following 289-residue polypeptide: Urease accessory protein UreD (289 aa).

It belongs to the UreD family. As to quaternary structure, ureD, UreF and UreG form a complex that acts as a GTP-hydrolysis-dependent molecular chaperone, activating the urease apoprotein by helping to assemble the nickel containing metallocenter of UreC. The UreE protein probably delivers the nickel.

The protein localises to the cytoplasm. Functionally, required for maturation of urease via the functional incorporation of the urease nickel metallocenter. The polypeptide is Urease accessory protein UreD (Xanthobacter autotrophicus (strain ATCC BAA-1158 / Py2)).